A 466-amino-acid polypeptide reads, in one-letter code: tRNA(Ile)-lysidine synthase (466 aa).

Position 26 to 31 (26 to 31 (SGGSDS)) interacts with ATP.

Belongs to the tRNA(Ile)-lysidine synthase family.

Its subcellular location is the cytoplasm. It catalyses the reaction cytidine(34) in tRNA(Ile2) + L-lysine + ATP = lysidine(34) in tRNA(Ile2) + AMP + diphosphate + H(+). Its function is as follows. Ligates lysine onto the cytidine present at position 34 of the AUA codon-specific tRNA(Ile) that contains the anticodon CAU, in an ATP-dependent manner. Cytidine is converted to lysidine, thus changing the amino acid specificity of the tRNA from methionine to isoleucine. This Oceanobacillus iheyensis (strain DSM 14371 / CIP 107618 / JCM 11309 / KCTC 3954 / HTE831) protein is tRNA(Ile)-lysidine synthase.